The chain runs to 157 residues: uncharacterized protein (157 aa).

In terms of domain architecture, N-acetyltransferase spans 9 to 146; the sequence is LLINYKTLDE…GDFYVWHPET (138 aa).

This is an uncharacterized protein from Bacillus cereus (strain ATCC 10987 / NRS 248).